The chain runs to 164 residues: Crossover junction endodeoxyribonuclease RuvC (164 aa).

Catalysis depends on residues Asp-7, Glu-67, and Asp-140. Asp-7, Glu-67, and Asp-140 together coordinate Mg(2+).

Belongs to the RuvC family. In terms of assembly, homodimer which binds Holliday junction (HJ) DNA. The HJ becomes 2-fold symmetrical on binding to RuvC with unstacked arms; it has a different conformation from HJ DNA in complex with RuvA. In the full resolvosome a probable DNA-RuvA(4)-RuvB(12)-RuvC(2) complex forms which resolves the HJ. The cofactor is Mg(2+).

It localises to the cytoplasm. The catalysed reaction is Endonucleolytic cleavage at a junction such as a reciprocal single-stranded crossover between two homologous DNA duplexes (Holliday junction).. In terms of biological role, the RuvA-RuvB-RuvC complex processes Holliday junction (HJ) DNA during genetic recombination and DNA repair. Endonuclease that resolves HJ intermediates. Cleaves cruciform DNA by making single-stranded nicks across the HJ at symmetrical positions within the homologous arms, yielding a 5'-phosphate and a 3'-hydroxyl group; requires a central core of homology in the junction. The consensus cleavage sequence is 5'-(A/T)TT(C/G)-3'. Cleavage occurs on the 3'-side of the TT dinucleotide at the point of strand exchange. HJ branch migration catalyzed by RuvA-RuvB allows RuvC to scan DNA until it finds its consensus sequence, where it cleaves and resolves the cruciform DNA. This chain is Crossover junction endodeoxyribonuclease RuvC, found in Chloroflexus aggregans (strain MD-66 / DSM 9485).